A 392-amino-acid chain; its full sequence is Arogenate dehydratase/prephenate dehydratase 1, chloroplastic (392 aa).

The N-terminal 48 residues, 1–48 (MALRCFPIWVCPQTTHHRSPLMGLAEFDADKRRRFCLWECSSSASQRA), are a transit peptide targeting the chloroplast. Residues 107-282 (RISFQGIPGA…NVTRFLILAR (176 aa)) enclose the Prephenate dehydratase domain. Residues 296-387 (SIVFSLEEGP…SFIRILGCYP (92 aa)) form the ACT domain.

Expressed in roots, leaves, stems, flowers and siliques.

It localises to the plastid. The protein localises to the chloroplast stroma. The catalysed reaction is L-arogenate + H(+) = L-phenylalanine + CO2 + H2O. The enzyme catalyses prephenate + H(+) = 3-phenylpyruvate + CO2 + H2O. It functions in the pathway amino-acid biosynthesis; L-phenylalanine biosynthesis; L-phenylalanine from L-arogenate: step 1/1. The protein operates within amino-acid biosynthesis; L-phenylalanine biosynthesis; phenylpyruvate from prephenate: step 1/1. Functionally, converts the prephenate produced from the shikimate-chorismate pathway into phenylalanine. Dehydratase that uses arogenate and prephenate as substrates. Utilzes more efficiently arogenate than prephenate. In Arabidopsis thaliana (Mouse-ear cress), this protein is Arogenate dehydratase/prephenate dehydratase 1, chloroplastic.